The following is a 500-amino-acid chain: Cytochrome P450 81F1 (500 aa).

Residues 1-21 (MLYFILLPLLFLVISYKFLYS) traverse the membrane as a helical segment. A Glycyl lysine isopeptide (Lys-Gly) (interchain with G-Cter in ubiquitin) cross-link involves residue Lys-248. Heme is bound at residue Cys-438.

It belongs to the cytochrome P450 family. Requires heme as cofactor.

It is found in the membrane. It functions in the pathway secondary metabolite biosynthesis. Its function is as follows. Involved in indole glucosinolate biosynthesis. Catalyzes hydroxylation reactions of the glucosinolate indole ring. Converts indol-3-yl-methylglucosinolate (I3M) to 4-hydroxy-indol-3-yl-methylglucosinolate (4OH-I3M) and/or 1-hydroxy-indol-3-yl-methylglucosinolate (1OH-I3M) intermediates. These hydroxy intermediates are converted to 4-methoxy-indol-3-yl-methylglucosinolate (4MO-I3M) and 1-methoxy-indol-3-yl-methylglucosinolate (1MO-I3M) by indole glucosinolate methyltransferase 1 and 2 (IGMT1 and IGMT2). The sequence is that of Cytochrome P450 81F1 from Arabidopsis thaliana (Mouse-ear cress).